The chain runs to 191 residues: NADH-quinone oxidoreductase subunit B (191 aa).

4 residues coordinate [4Fe-4S] cluster: C52, C53, C118, and C148.

This sequence belongs to the complex I 20 kDa subunit family. NDH-1 is composed of 14 different subunits. Subunits NuoB, C, D, E, F, and G constitute the peripheral sector of the complex. The cofactor is [4Fe-4S] cluster.

It is found in the cell inner membrane. The catalysed reaction is a quinone + NADH + 5 H(+)(in) = a quinol + NAD(+) + 4 H(+)(out). In terms of biological role, NDH-1 shuttles electrons from NADH, via FMN and iron-sulfur (Fe-S) centers, to quinones in the respiratory chain. The immediate electron acceptor for the enzyme in this species is believed to be a menaquinone. Couples the redox reaction to proton translocation (for every two electrons transferred, four hydrogen ions are translocated across the cytoplasmic membrane), and thus conserves the redox energy in a proton gradient. This is NADH-quinone oxidoreductase subunit B from Azobacteroides pseudotrichonymphae genomovar. CFP2.